The chain runs to 261 residues: Kallikrein 1-related peptidase b1 (261 aa).

A signal peptide spans Met1–Ala18. The propeptide at Pro19 to Arg24 is activation peptide. Positions Ile25–Ala258 constitute a Peptidase S1 domain. Cystine bridges form between Cys31/Cys173, Cys50/Cys66, Cys152/Cys219, Cys184/Cys198, and Cys209/Cys234. His65 serves as the catalytic Charge relay system. Asn102 carries an N-linked (GlcNAc...) asparagine glycan. Asp120 acts as the Charge relay system in catalysis. Residue Ser213 is the Charge relay system of the active site.

This sequence belongs to the peptidase S1 family. Kallikrein subfamily.

It carries out the reaction Preferential cleavage of Arg-|-Xaa bonds in small molecule substrates. Highly selective action to release kallidin (lysyl-bradykinin) from kininogen involves hydrolysis of Met-|-Xaa or Leu-|-Xaa.. In terms of biological role, glandular kallikreins cleave Met-Lys and Arg-Ser bonds in kininogen to release Lys-bradykinin. This is Kallikrein 1-related peptidase b1 (Klk1b1) from Mus musculus (Mouse).